We begin with the raw amino-acid sequence, 115 residues long: MGSHMTGENGQLALLDITVEFTGGLEMLFSNQRKHKISLPSLDITGAPSNIAYLIKYLCQNLMKDERKELFVLDDSVRPGILVLINDADWELEGEEQYRIQQNDNILFVSTLHGG.

Glycine 115 carries the 1-thioglycine modification. Glycine 115 participates in a covalent cross-link: Glycyl lysine isopeptide (Gly-Lys) (interchain with K-? in acceptor proteins).

This sequence belongs to the URM1 family. Post-translationally, C-terminal thiocarboxylation occurs in 2 steps, it is first acyl-adenylated (-COAMP) via the hesA/moeB/thiF part of UBA4, then thiocarboxylated (-COSH) via the rhodanese domain of UBA4.

Its subcellular location is the cytoplasm. It participates in tRNA modification; 5-methoxycarbonylmethyl-2-thiouridine-tRNA biosynthesis. Acts as a sulfur carrier required for 2-thiolation of mcm(5)S(2)U at tRNA wobble positions of cytosolic tRNA(Lys), tRNA(Glu) and tRNA(Gln). Serves as sulfur donor in tRNA 2-thiolation reaction by being thiocarboxylated (-COSH) at its C-terminus by the MOCS3 homolog UBA4. The sulfur is then transferred to tRNA to form 2-thiolation of mcm(5)S(2)U. Prior mcm(5) tRNA modification by the elongator complex is required for 2-thiolation. Also acts as a ubiquitin-like protein (UBL) that is covalently conjugated via an isopeptide bond to lysine residues of target proteins such as AHP1. The thiocarboxylated form serves as substrate for conjugation and oxidative stress specifically induces the formation of UBL-protein conjugates. The protein is Ubiquitin-related modifier 1 of Coccidioides immitis (strain RS) (Valley fever fungus).